A 220-amino-acid chain; its full sequence is tRNA (guanine-N(7)-)-methyltransferase (220 aa).

Glu44, Glu69, Asn96, and Asp118 together coordinate S-adenosyl-L-methionine. Asp118 is a catalytic residue. Lys122 contacts substrate. The interaction with RNA stretch occupies residues 124–129 (RHEKRR). Substrate-binding positions include Asp154 and 191 to 194 (TEYE).

It belongs to the class I-like SAM-binding methyltransferase superfamily. TrmB family.

It catalyses the reaction guanosine(46) in tRNA + S-adenosyl-L-methionine = N(7)-methylguanosine(46) in tRNA + S-adenosyl-L-homocysteine. The protein operates within tRNA modification; N(7)-methylguanine-tRNA biosynthesis. Functionally, catalyzes the formation of N(7)-methylguanine at position 46 (m7G46) in tRNA. This Geobacillus sp. (strain WCH70) protein is tRNA (guanine-N(7)-)-methyltransferase.